We begin with the raw amino-acid sequence, 421 residues long: ATP-dependent RNA helicase RhlB (421 aa).

The Q motif signature appears at 9 to 37 (QKFSDFALHPKVIEALENKGFHNCTPIQA). In terms of domain architecture, Helicase ATP-binding spans 40 to 219 (LPLTLAGRDV…FEQMNNAEYV (180 aa)). 53 to 60 (AQTGTGKT) contributes to the ATP binding site. A DEAD box motif is present at residues 165–168 (DEAD). Positions 245–390 (RLLQTLIEEE…VSKYNPEALM (146 aa)) constitute a Helicase C-terminal domain. The segment at 393–421 (LPKPLRLTRSRPGNGPRRTGAPRNRRRSG) is disordered. The segment covering 403–414 (RPGNGPRRTGAP) has biased composition (low complexity).

Belongs to the DEAD box helicase family. RhlB subfamily. Component of the RNA degradosome, which is a multiprotein complex involved in RNA processing and mRNA degradation.

It is found in the cytoplasm. It catalyses the reaction ATP + H2O = ADP + phosphate + H(+). In terms of biological role, DEAD-box RNA helicase involved in RNA degradation. Has RNA-dependent ATPase activity and unwinds double-stranded RNA. This Citrobacter koseri (strain ATCC BAA-895 / CDC 4225-83 / SGSC4696) protein is ATP-dependent RNA helicase RhlB.